The primary structure comprises 132 residues: Pro-MCH 2 (132 aa).

A signal peptide spans 1–24 (MRDSVLSVIFALALFLECYTPSMA). A disulfide bond links Cys-120 and Cys-129.

Belongs to the melanin-concentrating hormone family. In terms of tissue distribution, pituitary gland. Produced in neurons of lateral basal hypothalamus which project both to the brain and to the neural lobe of the pituitary gland from where MCH is released.

Functionally, plays a role in skin pigmentation by antagonizing the action of melanotropin alpha. Induces melanin concentration within the melanophores. May participate in the control of the hypothalamo-pituitary adrenal gland axis by inhibiting the release of ACTH. This Oncorhynchus keta (Chum salmon) protein is Pro-MCH 2 (mch2).